We begin with the raw amino-acid sequence, 296 residues long: Glycine--tRNA ligase alpha subunit (296 aa).

Belongs to the class-II aminoacyl-tRNA synthetase family. As to quaternary structure, tetramer of two alpha and two beta subunits.

It localises to the cytoplasm. It carries out the reaction tRNA(Gly) + glycine + ATP = glycyl-tRNA(Gly) + AMP + diphosphate. The protein is Glycine--tRNA ligase alpha subunit of Prochlorococcus marinus (strain SARG / CCMP1375 / SS120).